A 353-amino-acid polypeptide reads, in one-letter code: Ribosome biogenesis protein BRX1 homolog (353 aa).

Over residues 1-10 (MAATKRKRRG) the composition is skewed to basic residues. Residues 1–46 (MAATKRKRRGGFAVQAKKPKRNEIDAEPPAKRHATAEEVEEEERDR) form a disordered region. Positions 21 to 36 (RNEIDAEPPAKRHATA) are enriched in basic and acidic residues. The Brix domain occupies 60-249 (ERILIFSSRG…LIKIFQGSFG (190 aa)). A Glycyl lysine isopeptide (Lys-Gly) (interchain with G-Cter in SUMO2) cross-link involves residue Lys160. Ser261 carries the post-translational modification Phosphoserine. The residue at position 276 (Lys276) is an N6-acetyllysine. Glycyl lysine isopeptide (Lys-Gly) (interchain with G-Cter in SUMO2) cross-links involve residues Lys314 and Lys322.

This sequence belongs to the BRX1 family.

The protein resides in the nucleus. It is found in the nucleolus. Required for biogenesis of the 60S ribosomal subunit. The chain is Ribosome biogenesis protein BRX1 homolog (BRIX1) from Homo sapiens (Human).